Reading from the N-terminus, the 291-residue chain is Dihydroorotate dehydrogenase A (fumarate) (291 aa).

FMN is bound by residues serine 18 and 42 to 43 (KS). Residues lysine 42, 66–70 (NAVGL), and asparagine 126 each bind substrate. Asparagine 126 serves as a coordination point for FMN. Cysteine 129 acts as the Nucleophile in catalysis. Lysine 164 and isoleucine 190 together coordinate FMN. 191–192 (NT) is a substrate binding site. FMN contacts are provided by residues glycine 216, 242-243 (GG), and 264-265 (GS).

It belongs to the dihydroorotate dehydrogenase family. Type 1 subfamily. In terms of assembly, homodimer. FMN serves as cofactor.

It localises to the cytoplasm. It catalyses the reaction (S)-dihydroorotate + fumarate = orotate + succinate. Its pathway is pyrimidine metabolism; UMP biosynthesis via de novo pathway. Functionally, catalyzes the conversion of dihydroorotate to orotate with fumarate as the electron acceptor. The protein is Dihydroorotate dehydrogenase A (fumarate) (pyrD) of Lacticaseibacillus paracasei (strain ATCC 334 / BCRC 17002 / CCUG 31169 / CIP 107868 / KCTC 3260 / NRRL B-441) (Lactobacillus paracasei).